Reading from the N-terminus, the 286-residue chain is E3 ubiquitin-protein ligase SINA-like 7 (286 aa).

The segment at cysteine 51–threonine 87 adopts an RING-type zinc-finger fold. Residues valine 101–lysine 285 are SBD. Residues serine 104–methionine 162 form an SIAH-type zinc finger. The Zn(2+) site is built by cysteine 109, cysteine 116, histidine 128, cysteine 132, cysteine 139, cysteine 144, histidine 156, and histidine 161.

It belongs to the SINA (Seven in absentia) family.

It catalyses the reaction S-ubiquitinyl-[E2 ubiquitin-conjugating enzyme]-L-cysteine + [acceptor protein]-L-lysine = [E2 ubiquitin-conjugating enzyme]-L-cysteine + N(6)-ubiquitinyl-[acceptor protein]-L-lysine.. The protein operates within protein modification; protein ubiquitination. E3 ubiquitin-protein ligase that mediates ubiquitination and subsequent proteasomal degradation of target proteins. E3 ubiquitin ligases accept ubiquitin from an E2 ubiquitin-conjugating enzyme in the form of a thioester and then directly transfers the ubiquitin to targeted substrates. It probably triggers the ubiquitin-mediated degradation of different substrates. The chain is E3 ubiquitin-protein ligase SINA-like 7 from Arabidopsis thaliana (Mouse-ear cress).